The sequence spans 244 residues: Tubulin-folding cofactor B (244 aa).

At Met1 the chain carries N-acetylmethionine. Residue Tyr98 is modified to Phosphotyrosine. Ser110 is subject to Phosphoserine. Positions 183–225 (GLTDFKPGYWIGIRYDEPLGKNDGSVNGKRYFECQAKYGAFVK) constitute a CAP-Gly domain. Residue Lys219 is modified to N6-acetyllysine.

This sequence belongs to the TBCB family. In terms of assembly, supercomplex made of cofactors A to E. Cofactors A and D function by capturing and stabilizing tubulin in a quasi-native conformation. Cofactor E binds to the cofactor D-tubulin complex; interaction with cofactor C then causes the release of tubulin polypeptides that are committed to the native state. Cofactors B and E can form a heterodimer which binds to alpha-tubulin and enhances their ability to dissociate tubulin heterodimers. Interacts with GAN. Interacts with DCTN1. In terms of processing, ubiquitinated in the presence of GAN which targets it for degradation by the proteasome. Phosphorylation by PAK1 is required for normal function.

Its subcellular location is the cytoplasm. It localises to the cytoskeleton. Its function is as follows. Binds to alpha-tubulin folding intermediates after their interaction with cytosolic chaperonin in the pathway leading from newly synthesized tubulin to properly folded heterodimer. Involved in regulation of tubulin heterodimer dissociation. May function as a negative regulator of axonal growth. The sequence is that of Tubulin-folding cofactor B (TBCB) from Bos taurus (Bovine).